We begin with the raw amino-acid sequence, 188 residues long: UPF0398 protein BBR47_29830 (188 aa).

Belongs to the UPF0398 family.

The protein is UPF0398 protein BBR47_29830 of Brevibacillus brevis (strain 47 / JCM 6285 / NBRC 100599).